Here is a 318-residue protein sequence, read N- to C-terminus: Bis(5'-nucleosyl)-tetraphosphatase, symmetrical (318 aa).

The tract at residues Pro269–Asp318 is disordered. Residues Ala282–Gly297 are compositionally biased toward basic residues. Residues Ala309–Asp318 show a composition bias toward pro residues.

The protein belongs to the Ap4A hydrolase family.

It catalyses the reaction P(1),P(4)-bis(5'-adenosyl) tetraphosphate + H2O = 2 ADP + 2 H(+). Its function is as follows. Hydrolyzes diadenosine 5',5'''-P1,P4-tetraphosphate to yield ADP. In Xanthomonas oryzae pv. oryzae (strain PXO99A), this protein is Bis(5'-nucleosyl)-tetraphosphatase, symmetrical.